The following is a 333-amino-acid chain: Taste receptor type 2 member 110 (333 aa).

Residues 1–13 lie on the Extracellular side of the membrane; that stretch reads MFSQIISTSDIFT. The helical transmembrane segment at 14–34 threads the bilayer; the sequence is FTIILFVELVIGILGNGFIAL. Over 35–60 the chain is Cytoplasmic; sequence VNIMDWTKRRSISSADQILTALAITR. Residues 61 to 81 form a helical membrane-spanning segment; it reads FLYVWFMIICILLFMLCPHLL. Topologically, residues 82-89 are extracellular; the sequence is TRSEIVTS. A helical membrane pass occupies residues 90–110; that stretch reads IGIIWIVNNHFSVWLATCLGV. At 111–133 the chain is on the cytoplasmic side; sequence FYFLKIANFSNSLFLYLKWRVKK. A helical transmembrane segment spans residues 134–154; it reads VVLMIIQVSMIFLILNLLSLS. The Extracellular portion of the chain corresponds to 155-205; the sequence is MYDQFSIDVYEGNTSYNLGDSTPFPTISLFINSSKVFVITNSSHIFLPINS. N-linked (GlcNAc...) asparagine glycans are attached at residues N186 and N195. A helical transmembrane segment spans residues 206–226; the sequence is LFMLIPFTVSLVAFLMLIFSL. Residues 227-255 lie on the Cytoplasmic side of the membrane; that stretch reads WKHHKKMQVNAKPPRDASTMAHIKALQTG. The helical transmembrane segment at 256–276 threads the bilayer; the sequence is FSFLLLYAVYLLFIVIGMLSL. Residues 277–283 are Extracellular-facing; sequence RLIGGKL. The helical transmembrane segment at 284-304 threads the bilayer; that stretch reads ILLFDHISGIGFPISHSFVLI. Over 305–333 the chain is Cytoplasmic; the sequence is LGNNKLRQASLSVLHCLRCRSKDMDTMGP.

Belongs to the G-protein coupled receptor T2R family.

The protein localises to the membrane. Gustducin-coupled receptor implicated in the perception of bitter compounds in the oral cavity and the gastrointestinal tract. Signals through PLCB2 and the calcium-regulated cation channel TRPM5. This chain is Taste receptor type 2 member 110, found in Mus musculus (Mouse).